The primary structure comprises 289 residues: Acetylglutamate kinase (289 aa).

Residues 60–61 (GG), Arg-82, and Asn-182 contribute to the substrate site.

The protein belongs to the acetylglutamate kinase family. ArgB subfamily.

The protein localises to the cytoplasm. The enzyme catalyses N-acetyl-L-glutamate + ATP = N-acetyl-L-glutamyl 5-phosphate + ADP. It participates in amino-acid biosynthesis; L-arginine biosynthesis; N(2)-acetyl-L-ornithine from L-glutamate: step 2/4. In terms of biological role, catalyzes the ATP-dependent phosphorylation of N-acetyl-L-glutamate. The protein is Acetylglutamate kinase of Methanothrix thermoacetophila (strain DSM 6194 / JCM 14653 / NBRC 101360 / PT) (Methanosaeta thermophila).